The primary structure comprises 678 residues: GAS2-like protein 1 (678 aa).

The residue at position 2 (Ala-2) is an N-acetylalanine. Positions Glu-27 to Ala-148 constitute a Calponin-homology (CH) domain. Positions Asn-203–Arg-275 constitute a GAR domain. Positions Cys-276–Phe-291 are enriched in polar residues. 2 disordered regions span residues Cys-276–Leu-524 and Ala-538–Met-678. 2 positions are modified to phosphoserine: Ser-306 and Ser-316. The span at Gly-327–Asp-340 shows a compositional bias: basic and acidic residues. The residue at position 334 (Thr-334) is a Phosphothreonine. Ser-352 and Ser-355 each carry phosphoserine. Residues Asp-354 to Gly-365 are compositionally biased toward low complexity. Over residues Arg-370 to Glu-381 the composition is skewed to basic and acidic residues. Residues Pro-392 to Ser-403 are compositionally biased toward low complexity. Residue Ser-394 is modified to Phosphoserine. Over residues Gln-404–Arg-413 the composition is skewed to basic and acidic residues. Phosphoserine occurs at positions 436 and 438. Basic and acidic residues predominate over residues Gln-437–Gln-454. A compositionally biased stretch (gly residues) spans Gly-461–Gly-471. Phosphoserine occurs at positions 482 and 489. A compositionally biased stretch (pro residues) spans Ala-485–Gly-495. Arg-490 carries the post-translational modification Omega-N-methylarginine. Ser-493 is subject to Phosphoserine. Phosphothreonine is present on Thr-501. Residue Arg-507 is modified to Omega-N-methylarginine. Composition is skewed to low complexity over residues Pro-509–Gln-519 and Asp-554–Ser-568. Position 630 is an omega-N-methylarginine (Arg-630). A compositionally biased stretch (basic and acidic residues) spans Gly-631 to Pro-641. Position 654 is a phosphoserine (Ser-654). Polar residues predominate over residues His-666–Met-678.

The protein belongs to the GAS2 family. In terms of assembly, interacts with MAPRE1.

Its subcellular location is the cytoplasm. It is found in the cytoskeleton. The protein localises to the stress fiber. Seems to be involved in the cross-linking of microtubules and microfilaments. Regulates microtubule dynamics and stability by interacting with microtubule plus-end tracking proteins, such as MAPRE1, to regulate microtubule growth along actin stress fibers. The chain is GAS2-like protein 1 (Gas2l1) from Mus musculus (Mouse).